An 84-amino-acid polypeptide reads, in one-letter code: Cryptic plasmid protein A (84 aa).

This Neisseria gonorrhoeae protein is Cryptic plasmid protein A (cppA).